The sequence spans 236 residues: Ribose-5-phosphate isomerase A (236 aa).

Substrate contacts are provided by residues 29-32, 86-89, and 99-102; these read SGST, DGAD, and KGGG. Glu-108 serves as the catalytic Proton acceptor. Residue Lys-126 participates in substrate binding.

It belongs to the ribose 5-phosphate isomerase family. In terms of assembly, homodimer.

The catalysed reaction is aldehydo-D-ribose 5-phosphate = D-ribulose 5-phosphate. Its pathway is carbohydrate degradation; pentose phosphate pathway; D-ribose 5-phosphate from D-ribulose 5-phosphate (non-oxidative stage): step 1/1. Its function is as follows. Catalyzes the reversible conversion of ribose-5-phosphate to ribulose 5-phosphate. This chain is Ribose-5-phosphate isomerase A, found in Prochlorococcus marinus (strain NATL1A).